The primary structure comprises 513 residues: MATEESGGLAQTAAVKLSEMGERTKQLGNAIQDPERQRRIILVIVCVALLLDNMLYMVIVPIVPDYLAHLESESEQAHVKGNSSINITQNENFDLQIGVLFASKAILQLLVNPLTGTFIDRVGYDIPLLIGLSIMFVSTCIFAFAENYATLFMARSLQGLGSAFADTSGIAMIADKYAEESERSRALGIALAFISFGSLAAPPFGGVLYEFAGKRFPFIALACVCLADGILCLTVLKPFSSRTRENMPVGTPIYKLMIDPYIAVVAGALTTCNIPLAFLEPTIANWMEETMNASQWQIGITWLPAFFPHILGVYLTVKLAAKYPHLQWFYGALGMVIIGASSCIVPACKNFEQLIIPLCGVCFGIALVDTALLPTLAFLVDVRHVSVYGSVYAIADISYCVAYALGPIVAGKIVHDLGFVQLNLGMGLANVLYAPALLLLRNVSLMKPSHSERNMLLEEGATGLYDTIRMEERQRKKHGYSSSGNCVPIDENGTFAGQSKSFSEEETSEPEYI.

The Cytoplasmic portion of the chain corresponds to 1 to 39; sequence MATEESGGLAQTAAVKLSEMGERTKQLGNAIQDPERQRR. The chain crosses the membrane as a helical span at residues 40-60; the sequence is IILVIVCVALLLDNMLYMVIV. Residues 61 to 98 lie on the Lumenal, vesicle side of the membrane; the sequence is PIVPDYLAHLESESEQAHVKGNSSINITQNENFDLQIG. N-linked (GlcNAc...) asparagine glycosylation is found at N82 and N86. Residues 99 to 119 traverse the membrane as a helical segment; the sequence is VLFASKAILQLLVNPLTGTFI. The Cytoplasmic segment spans residues 120 to 125; that stretch reads DRVGYD. Residues 126 to 146 form a helical membrane-spanning segment; the sequence is IPLLIGLSIMFVSTCIFAFAE. At 147–156 the chain is on the lumenal, vesicle side; that stretch reads NYATLFMARS. The helical transmembrane segment at 157–174 threads the bilayer; that stretch reads LQGLGSAFADTSGIAMIA. The Cytoplasmic portion of the chain corresponds to 175 to 186; the sequence is DKYAEESERSRA. A helical transmembrane segment spans residues 187–207; sequence LGIALAFISFGSLAAPPFGGV. At 208–215 the chain is on the lumenal, vesicle side; sequence LYEFAGKR. A helical transmembrane segment spans residues 216 to 236; sequence FPFIALACVCLADGILCLTVL. Residues 237–257 are Cytoplasmic-facing; the sequence is KPFSSRTRENMPVGTPIYKLM. The chain crosses the membrane as a helical span at residues 258–278; the sequence is IDPYIAVVAGALTTCNIPLAF. The Lumenal, vesicle segment spans residues 279 to 296; it reads LEPTIANWMEETMNASQW. N-linked (GlcNAc...) asparagine glycosylation is present at N292. A helical membrane pass occupies residues 297–317; that stretch reads QIGITWLPAFFPHILGVYLTV. Residues 318-327 are Cytoplasmic-facing; the sequence is KLAAKYPHLQ. The helical transmembrane segment at 328-348 threads the bilayer; the sequence is WFYGALGMVIIGASSCIVPAC. The Lumenal, vesicle segment spans residues 349–353; it reads KNFEQ. The chain crosses the membrane as a helical span at residues 354–374; the sequence is LIIPLCGVCFGIALVDTALLP. Residues 375 to 390 lie on the Cytoplasmic side of the membrane; sequence TLAFLVDVRHVSVYGS. The chain crosses the membrane as a helical span at residues 391 to 411; sequence VYAIADISYCVAYALGPIVAG. The Lumenal, vesicle segment spans residues 412-418; it reads KIVHDLG. The chain crosses the membrane as a helical span at residues 419–439; it reads FVQLNLGMGLANVLYAPALLL. The Cytoplasmic segment spans residues 440 to 513; that stretch reads LRNVSLMKPS…EEETSEPEYI (74 aa). Residues 475–513 are disordered; the sequence is RKKHGYSSSGNCVPIDENGTFAGQSKSFSEEETSEPEYI. Residues 504 to 513 are compositionally biased toward acidic residues; sequence EEETSEPEYI.

Belongs to the major facilitator superfamily. Vesicular transporter family.

It localises to the membrane. Its function is as follows. Involved in acetylcholine transport into synaptic vesicles. The sequence is that of Probable vesicular acetylcholine transporter-A from Danio rerio (Zebrafish).